The following is a 419-amino-acid chain: Divergent protein kinase domain 1C (419 aa).

Residues M1–R22 are Cytoplasmic-facing. The May mediate ER retention signature appears at R16 to R17. The helical transmembrane segment at G23–L43 threads the bilayer. The Lumenal portion of the chain corresponds to R44–K419.

The protein belongs to the DIPK family. Post-translationally, among the many cysteines in the lumenal domain, most are probably involved in disulfide bonds.

Its subcellular location is the endoplasmic reticulum membrane. This is Divergent protein kinase domain 1C from Homo sapiens (Human).